A 327-amino-acid polypeptide reads, in one-letter code: uncharacterized protein (327 aa).

Residues 13 to 33 (IICIISIIVLLLIIISLYPHK) traverse the membrane as a helical segment.

Its subcellular location is the membrane. This is an uncharacterized protein from Caenorhabditis elegans.